The primary structure comprises 577 residues: Myb-like protein N (577 aa).

Disordered stretches follow at residues 1–23 (MMTI…NIYT), 206–225 (TPFS…SPLN), and 240–264 (SSSS…LSSS). The segment covering 213 to 225 (PNSPNSTSSSPLN) has biased composition (low complexity). HTH myb-type domains are found at residues 403-465 (KKST…CPAI) and 466-517 (RKGS…SREV). 2 DNA-binding regions (H-T-H motif) span residues 437-461 (WKKI…KRVL) and 489-513 (WKNV…KSCM). One can recognise a Myb-like domain in the interval 518 to 570 (PWTPKEDEILQKKVIENKQDSTKEIGWMDLSKAMARARQTKIPRTALECKIRF).

It localises to the nucleus. The protein is Myb-like protein N (mybN) of Dictyostelium discoideum (Social amoeba).